The following is a 107-amino-acid chain: uncharacterized protein (107 aa).

This is an uncharacterized protein from Acanthamoeba polyphaga mimivirus (APMV).